A 243-amino-acid chain; its full sequence is MRIDIFTLFPEMFTGVLSSSILGKASEKELVDFHVTNFRDFSESKHGTVDDTPYGGGGGMVLKPEPLFRAVEGLTGEKKPRVILMCPQGVPYHQKLAEELAQEEHLVFICGHYEGYDERIREHLVTDEISIGDYVLTGGELAAMVVIDSVVRLQPGALGNQTSAVEDSFSTGLLEYPHYTRPAEFRGWKVPDVLLSGHHANIESWRLKESLRRTKARRPDLLEKLALTDEMKKLLAELEQEKK.

S-adenosyl-L-methionine-binding positions include Gly111 and 131-136; that span reads IGDYVL.

It belongs to the RNA methyltransferase TrmD family. As to quaternary structure, homodimer.

The protein localises to the cytoplasm. The enzyme catalyses guanosine(37) in tRNA + S-adenosyl-L-methionine = N(1)-methylguanosine(37) in tRNA + S-adenosyl-L-homocysteine + H(+). Its function is as follows. Specifically methylates guanosine-37 in various tRNAs. This chain is tRNA (guanine-N(1)-)-methyltransferase, found in Brevibacillus brevis (strain 47 / JCM 6285 / NBRC 100599).